Consider the following 857-residue polypeptide: Protein translocase subunit SecA (857 aa).

ATP is bound by residues Gln88, 106-110 (GEGKT), and Asp496. Positions 833, 835, 844, and 845 each coordinate Zn(2+).

This sequence belongs to the SecA family. As to quaternary structure, monomer and homodimer. Part of the essential Sec protein translocation apparatus which comprises SecA, SecYEG and auxiliary proteins SecDF-YajC and YidC. Zn(2+) serves as cofactor.

The protein localises to the cell inner membrane. It is found in the cytoplasm. The enzyme catalyses ATP + H2O + cellular proteinSide 1 = ADP + phosphate + cellular proteinSide 2.. Part of the Sec protein translocase complex. Interacts with the SecYEG preprotein conducting channel. Has a central role in coupling the hydrolysis of ATP to the transfer of proteins into and across the cell membrane, serving as an ATP-driven molecular motor driving the stepwise translocation of polypeptide chains across the membrane. The sequence is that of Protein translocase subunit SecA from Sulfurimonas denitrificans (strain ATCC 33889 / DSM 1251) (Thiomicrospira denitrificans (strain ATCC 33889 / DSM 1251)).